The chain runs to 483 residues: Glutamyl-tRNA(Gln) amidotransferase subunit A (483 aa).

Active-site charge relay system residues include Lys-75 and Ser-150. Ser-174 functions as the Acyl-ester intermediate in the catalytic mechanism.

This sequence belongs to the amidase family. GatA subfamily. In terms of assembly, heterotrimer of A, B and C subunits.

It carries out the reaction L-glutamyl-tRNA(Gln) + L-glutamine + ATP + H2O = L-glutaminyl-tRNA(Gln) + L-glutamate + ADP + phosphate + H(+). Allows the formation of correctly charged Gln-tRNA(Gln) through the transamidation of misacylated Glu-tRNA(Gln) in organisms which lack glutaminyl-tRNA synthetase. The reaction takes place in the presence of glutamine and ATP through an activated gamma-phospho-Glu-tRNA(Gln). The polypeptide is Glutamyl-tRNA(Gln) amidotransferase subunit A (Legionella pneumophila subsp. pneumophila (strain Philadelphia 1 / ATCC 33152 / DSM 7513)).